The primary structure comprises 267 residues: Undecaprenyl-diphosphatase (267 aa).

A run of 8 helical transmembrane segments spans residues 1–21, 39–59, 83–103, 111–131, 144–164, 189–209, 218–238, and 246–266; these read MSYF…FLPI, QGLA…VIYF, AKLA…GLLM, LRSA…LWWV, TGWK…IPGT, FLMS…KLVT, FLLT…HFFL, and MTPF…FLLM.

Belongs to the UppP family.

The protein resides in the cell inner membrane. The enzyme catalyses di-trans,octa-cis-undecaprenyl diphosphate + H2O = di-trans,octa-cis-undecaprenyl phosphate + phosphate + H(+). Catalyzes the dephosphorylation of undecaprenyl diphosphate (UPP). Confers resistance to bacitracin. The polypeptide is Undecaprenyl-diphosphatase (Vibrio campbellii (strain ATCC BAA-1116)).